A 525-amino-acid chain; its full sequence is ATP synthase subunit alpha (525 aa).

ATP is bound at residue 171–178 (GDRQTGKS).

The protein belongs to the ATPase alpha/beta chains family. In terms of assembly, F-type ATPases have 2 components, CF(1) - the catalytic core - and CF(0) - the membrane proton channel. CF(1) has five subunits: alpha(3), beta(3), gamma(1), delta(1), epsilon(1). CF(0) has three main subunits: a(1), b(2) and c(9-12). The alpha and beta chains form an alternating ring which encloses part of the gamma chain. CF(1) is attached to CF(0) by a central stalk formed by the gamma and epsilon chains, while a peripheral stalk is formed by the delta and b chains.

The protein localises to the cell inner membrane. It catalyses the reaction ATP + H2O + 4 H(+)(in) = ADP + phosphate + 5 H(+)(out). Produces ATP from ADP in the presence of a proton gradient across the membrane. The alpha chain is a regulatory subunit. This chain is ATP synthase subunit alpha, found in Flavobacterium psychrophilum (strain ATCC 49511 / DSM 21280 / CIP 103535 / JIP02/86).